The primary structure comprises 288 residues: HTH-type transcriptional regulator CzcR (288 aa).

The HTH lysR-type domain occupies 1–58 (MELRDLQIFQSVADQGSVSSAAKELNYVQSNVTARIKQLENELKTPLFYRHKRGMTLT). The H-T-H motif DNA-binding region spans 18–37 (VSSAAKELNYVQSNVTARIK).

It belongs to the LysR transcriptional regulatory family.

The chain is HTH-type transcriptional regulator CzcR (czcR) from Bacillus anthracis.